An 861-amino-acid polypeptide reads, in one-letter code: MFSGVTGILNRGHKIKGTVVLMRKNVLDINSLTTVGGVIGQGFDILGSTVDNLTAFLGRSVSLQLISATKPDATGKGKLGKATFLEGIISSLPTLGAGQSAFKIHFEWDDDMGIPGAFYIKNFMQTEFFLVSLTLDDIPNHGSIYFVCNSWIYNAKHHKIDRIFFANQTYLPSETPAPLVHYREEELNNLRGDGTGERKEWERIYDYDVYNDLGNPDSGENHARPVLGGSETYPYPRRGRTGRKPTRKDPNSESRSDYVYLPRDEAFGHLKSSDFLTYGLKAVSQNVVPALESVFFDLNFTPNEFDSFDEVHGLYEGGIKLPTNILSQISPLPVLKEIFRTDGENTLKYPPPKVIQVSRSGWMTDEEFAREMLAGVNPNVICCLQEFPPRSKLDSQIYGDHTSKISKEHLEPNLEGLTVEEAIQNKKLFLLDHHDSIMPYLRRINSTSTKAYATRTILFLNNNQNLKPLAIELSLPHPQGDEHGAVSYVYQPALEGVESSIWLLAKAYVIVNDSCYHQLVSHWLNTHAVVEPFVIATNRHLSCLHPIYKLLYPHYRDTMNINSLARLSLVNDGGIIEKTFLWGRYSMEMSSKVYKNWVFTEQALPADLIKRGMAIEDPSSPCGVKLVVEDYPYAVDGLEIWAIIKTWVQDYVSLYYTSDEKLRQDSELQAWWKELVEVGHGDKKNEPWWPKMQTREDLIEVCSIVIWTASALHAAVNFGQYSYGGLILNRPTLSRRFMPEKGSAEFEELVKSPQKAYLKTITPKFQTLIDLSVIEILSRHASDELYLGERDNPNWTSDKRALEAFKKFGNKLAEIEKKLTQRNNDEKLRNRHGPVEMPYTLLYPSSKEGLTFRGIPNSISI.

Residues 41–166 form the PLAT domain; sequence QGFDILGSTV…HHKIDRIFFA (126 aa). The region spanning 169 to 861 is the Lipoxygenase domain; sequence TYLPSETPAP…FRGIPNSISI (693 aa). The interval 215–257 is disordered; it reads NPDSGENHARPVLGGSETYPYPRRGRTGRKPTRKDPNSESRSD. The span at 237–246 shows a compositional bias: basic residues; it reads RRGRTGRKPT. A compositionally biased stretch (basic and acidic residues) spans 247-257; that stretch reads RKDPNSESRSD. 5 residues coordinate Fe cation: histidine 522, histidine 527, histidine 713, asparagine 717, and isoleucine 861.

This sequence belongs to the lipoxygenase family. The cofactor is Fe cation.

It localises to the cytoplasm. It catalyses the reaction (9Z,12Z)-octadecadienoate + O2 = (9S)-hydroperoxy-(10E,12Z)-octadecadienoate. It participates in lipid metabolism; oxylipin biosynthesis. In terms of biological role, plant lipoxygenase may be involved in a number of diverse aspects of plant physiology including growth and development, pest resistance, and senescence or responses to wounding. It catalyzes the hydroperoxidation of lipids containing a cis,cis-1,4-pentadiene structure. The polypeptide is Seed linoleate 9S-lipoxygenase-3 (LOX1.3) (Pisum sativum (Garden pea)).